Reading from the N-terminus, the 408-residue chain is Probable ethanolamine permease EutH (408 aa).

11 helical membrane passes run 1-21 (MGIN…AAVD), 61-81 (AMVG…PVII), 89-109 (ANPS…FFLA), 126-146 (ILGS…LGII), 155-175 (ALGV…GGLI), 192-212 (FALI…VALG), 230-250 (FLVA…LLGW), 274-294 (IEVI…VLLL), 313-333 (NIAA…FGMM), 342-362 (VINC…LGFA), and 369-389 (MIFP…GVAM).

It belongs to the EutH family.

The protein resides in the cell inner membrane. It catalyses the reaction ethanolamine(in) = ethanolamine(out). It functions in the pathway amine and polyamine degradation; ethanolamine degradation. Functionally, probably involved in the diffusion of protonated ethanolamine (EA) into the cell at low pH. At low pH most EA is protonated, and this permease becomes necessary. Contributes to bacterial survival and replication in acidified macrophage vacuoles, but not to bacterial uptake by macrophages. Expression of the eut operon allows this bacteria to use ethanolamine (EA) as a carbon, nitrogen and energy source. It relies on cobalamin (vitamin B12) both as a cofactor for the ethanolamine ammonia-lyase (EAL) activity and to induce the operon. EA enhances bacterial survival in macrophages in a concentration-dependent manner, suggesting it is an important nutrient during infection. The sequence is that of Probable ethanolamine permease EutH from Salmonella typhimurium (strain LT2 / SGSC1412 / ATCC 700720).